Reading from the N-terminus, the 197-residue chain is NADH-quinone oxidoreductase subunit C (197 aa).

This sequence belongs to the complex I 30 kDa subunit family. NDH-1 is composed of 14 different subunits. Subunits NuoB, C, D, E, F, and G constitute the peripheral sector of the complex.

It localises to the cell inner membrane. The catalysed reaction is a quinone + NADH + 5 H(+)(in) = a quinol + NAD(+) + 4 H(+)(out). Its function is as follows. NDH-1 shuttles electrons from NADH, via FMN and iron-sulfur (Fe-S) centers, to quinones in the respiratory chain. The immediate electron acceptor for the enzyme in this species is believed to be ubiquinone. Couples the redox reaction to proton translocation (for every two electrons transferred, four hydrogen ions are translocated across the cytoplasmic membrane), and thus conserves the redox energy in a proton gradient. The protein is NADH-quinone oxidoreductase subunit C of Caulobacter vibrioides (strain ATCC 19089 / CIP 103742 / CB 15) (Caulobacter crescentus).